Here is a 371-residue protein sequence, read N- to C-terminus: Tetraacyldisaccharide 4'-kinase (371 aa).

An ATP-binding site is contributed by A63–T70.

The protein belongs to the LpxK family.

It carries out the reaction a lipid A disaccharide + ATP = a lipid IVA + ADP + H(+). Its pathway is glycolipid biosynthesis; lipid IV(A) biosynthesis; lipid IV(A) from (3R)-3-hydroxytetradecanoyl-[acyl-carrier-protein] and UDP-N-acetyl-alpha-D-glucosamine: step 6/6. Its function is as follows. Transfers the gamma-phosphate of ATP to the 4'-position of a tetraacyldisaccharide 1-phosphate intermediate (termed DS-1-P) to form tetraacyldisaccharide 1,4'-bis-phosphate (lipid IVA). The chain is Tetraacyldisaccharide 4'-kinase from Anaeromyxobacter sp. (strain Fw109-5).